Reading from the N-terminus, the 343-residue chain is Thymidine kinase (343 aa).

Residue 27–34 (GAYGIGKS) coordinates ATP. The active-site Proton acceptor is the Glu-56. Substrate-binding residues include Tyr-74 and Gln-98. ATP is bound at residue Arg-188. Arg-194 is a binding site for substrate.

This sequence belongs to the herpesviridae thymidine kinase family. As to quaternary structure, homodimer.

It catalyses the reaction thymidine + ATP = dTMP + ADP + H(+). Catalyzes the transfer of the gamma-phospho group of ATP to thymidine to generate dTMP in the salvage pathway of pyrimidine synthesis. The dTMP serves as a substrate for DNA polymerase during viral DNA replication. Allows the virus to be reactivated and to grow in non-proliferative cells lacking a high concentration of phosphorylated nucleic acid precursors. In Felidae (cat family), this protein is Thymidine kinase.